Here is a 490-residue protein sequence, read N- to C-terminus: ABC transporter ATP-binding protein ModF (490 aa).

2 consecutive ABC transporter domains span residues 4 to 235 (LQIL…AHSE) and 261 to 489 (IVLN…LTKI). ATP-binding positions include 36–43 (GSNGSGKS) and 293–300 (GPNGAGKS).

It belongs to the ABC transporter superfamily.

The protein localises to the cell inner membrane. Its function is as follows. Probably not involved in the transport of molybdenum into the cell. The sequence is that of ABC transporter ATP-binding protein ModF (modF) from Escherichia coli (strain K12).